A 314-amino-acid chain; its full sequence is Olfactory receptor 5F1 (314 aa).

Residues Met1 to Ile25 are Extracellular-facing. The N-linked (GlcNAc...) asparagine glycan is linked to Asn5. The chain crosses the membrane as a helical span at residues Ile26–Ile46. The Cytoplasmic segment spans residues Leu47–Gln54. The helical transmembrane segment at Leu55–Thr75 threads the bilayer. At Thr76–Leu99 the chain is on the extracellular side. Cys97 and Cys189 are joined by a disulfide. The helical transmembrane segment at Gln100–Tyr120 threads the bilayer. Over Asp121 to Thr139 the chain is Cytoplasmic. The chain crosses the membrane as a helical span at residues Val140–Thr160. Over Ser161–Glu196 the chain is Extracellular. Residues Ser197–Ser217 form a helical membrane-spanning segment. At Tyr218–Ala237 the chain is on the cytoplasmic side. The helical transmembrane segment at Phe238 to Thr258 threads the bilayer. Over Tyr259 to Asp271 the chain is Extracellular. The helical transmembrane segment at Lys272–Leu292 threads the bilayer. Topologically, residues Arg293–Leu314 are cytoplasmic.

It belongs to the G-protein coupled receptor 1 family.

The protein localises to the cell membrane. Functionally, odorant receptor. In Homo sapiens (Human), this protein is Olfactory receptor 5F1 (OR5F1).